The following is a 312-amino-acid chain: Ribosomal RNA small subunit methyltransferase H (312 aa).

S-adenosyl-L-methionine contacts are provided by residues 35-37, Asp55, Phe80, Asp102, and Gln109; that span reads GGH.

It belongs to the methyltransferase superfamily. RsmH family.

Its subcellular location is the cytoplasm. The enzyme catalyses cytidine(1402) in 16S rRNA + S-adenosyl-L-methionine = N(4)-methylcytidine(1402) in 16S rRNA + S-adenosyl-L-homocysteine + H(+). Specifically methylates the N4 position of cytidine in position 1402 (C1402) of 16S rRNA. The sequence is that of Ribosomal RNA small subunit methyltransferase H from Pseudoalteromonas translucida (strain TAC 125).